The sequence spans 257 residues: MLTFIGLGLYDQKDISVKGLEAIREADVVYAEFYTSRLMGATLEDMQELYGKPVKVLMREDVEQHPKDTVLSDAVDKKVVFLTGGDAMVATTHVDLRLRAKKMGIETRLIHGASIQSAVCGLTGLQNYRFGKSATIAFPYKDIISETPYDTILMNKKNGLHTLLFLDIDREKGYMTVNRGIELLLKVEERRKEGAVAGALCVGIARAGSPSPCVRAGRIEELQAFDFGGPLHIMVMPADLHFLEEEALQDLAGLKLG.

S-adenosyl-L-methionine contacts are provided by residues Leu-9, Asp-86, Val-89, 114–115 (SI), Leu-166, Ala-207, and His-232.

It belongs to the diphthine synthase family. As to quaternary structure, homodimer.

It carries out the reaction 2-[(3S)-amino-3-carboxypropyl]-L-histidyl-[translation elongation factor 2] + 3 S-adenosyl-L-methionine = diphthine-[translation elongation factor 2] + 3 S-adenosyl-L-homocysteine + 3 H(+). The protein operates within protein modification; peptidyl-diphthamide biosynthesis. Its function is as follows. S-adenosyl-L-methionine-dependent methyltransferase that catalyzes the trimethylation of the amino group of the modified target histidine residue in translation elongation factor 2 (EF-2), to form an intermediate called diphthine. The three successive methylation reactions represent the second step of diphthamide biosynthesis. The chain is Diphthine synthase from Methanocella arvoryzae (strain DSM 22066 / NBRC 105507 / MRE50).